A 157-amino-acid chain; its full sequence is Ribosome maturation factor RimP (157 aa).

Belongs to the RimP family.

Its subcellular location is the cytoplasm. Required for maturation of 30S ribosomal subunits. This chain is Ribosome maturation factor RimP, found in Thermobifida fusca (strain YX).